The primary structure comprises 401 residues: 3-hydroxyisobutyryl-CoA hydrolase-like protein 1, mitochondrial (401 aa).

The N-terminal 26 residues, 1-26 (MHNAKGLLGRIVRDKLWRFGYRRSLC), are a transit peptide targeting the mitochondrion.

It belongs to the enoyl-CoA hydratase/isomerase family.

It localises to the mitochondrion. This chain is 3-hydroxyisobutyryl-CoA hydrolase-like protein 1, mitochondrial, found in Arabidopsis thaliana (Mouse-ear cress).